Here is a 594-residue protein sequence, read N- to C-terminus: UvrABC system protein C (594 aa).

Positions 14-91 (DQPGCYLMKD…IKKYDPKYNI (78 aa)) constitute a GIY-YIG domain. In terms of domain architecture, UVR spans 196 to 231 (KEVRSELEIKMYEASEKLEFERAKELRDQIAHIDAI).

It belongs to the UvrC family. Interacts with UvrB in an incision complex.

The protein localises to the cytoplasm. Functionally, the UvrABC repair system catalyzes the recognition and processing of DNA lesions. UvrC both incises the 5' and 3' sides of the lesion. The N-terminal half is responsible for the 3' incision and the C-terminal half is responsible for the 5' incision. This Bacillus cereus (strain B4264) protein is UvrABC system protein C.